Here is a 437-residue protein sequence, read N- to C-terminus: Neomycin resistance protein (437 aa).

Disordered stretches follow at residues 161 to 285 and 305 to 338; these read GQRG…EEEA and VSGA…PVPD. Positions 203 to 229 are enriched in low complexity; that stretch reads PPTGARSPGATAGARATASTSSSSVRS. Residues 324 to 338 are compositionally biased toward basic residues; that stretch reads RRRHRGRRHGRPVPD.

The protein belongs to the Gram-positive plasmids replication protein type 1 family.

The polypeptide is Neomycin resistance protein (Streptomyces cyanogenus).